The sequence spans 479 residues: Serine palmitoyltransferase 1 (479 aa).

Over 1–16 (MFLFDIYNNILYYTKE) the chain is Lumenal. A helical membrane pass occupies residues 17 to 37 (FIVTSTSPNLFIHGLMAVFII). The Cytoplasmic segment spans residues 38-479 (YLLTKRPFKP…KCTSFVLESN (442 aa)).

It belongs to the class-II pyridoxal-phosphate-dependent aminotransferase family. Forms a heterodimer with sptB. It depends on pyridoxal 5'-phosphate as a cofactor.

The protein localises to the endoplasmic reticulum membrane. The catalysed reaction is L-serine + hexadecanoyl-CoA + H(+) = 3-oxosphinganine + CO2 + CoA. It functions in the pathway lipid metabolism; sphingolipid metabolism. Functionally, component of serine palmitoyltransferase (SPT), which catalyzes the committed step in the synthesis of sphingolipids, the condensation of serine with palmitoyl CoA to form the long chain base 3-ketosphinganine. The polypeptide is Serine palmitoyltransferase 1 (sptA) (Dictyostelium discoideum (Social amoeba)).